The primary structure comprises 640 residues: Threonine--tRNA ligase (640 aa).

The 61-residue stretch at 1–61 (MPIITLPDGS…DHDATLQIIT (61 aa)) folds into the TGS domain. The segment at 242 to 533 (DHRKLGKRLD…LIEHYEGAFP (292 aa)) is catalytic. Positions 333, 384, and 510 each coordinate Zn(2+).

This sequence belongs to the class-II aminoacyl-tRNA synthetase family. As to quaternary structure, homodimer. Requires Zn(2+) as cofactor.

It is found in the cytoplasm. It carries out the reaction tRNA(Thr) + L-threonine + ATP = L-threonyl-tRNA(Thr) + AMP + diphosphate + H(+). Functionally, catalyzes the attachment of threonine to tRNA(Thr) in a two-step reaction: L-threonine is first activated by ATP to form Thr-AMP and then transferred to the acceptor end of tRNA(Thr). Also edits incorrectly charged L-seryl-tRNA(Thr). This chain is Threonine--tRNA ligase, found in Azotobacter vinelandii (strain DJ / ATCC BAA-1303).